We begin with the raw amino-acid sequence, 209 residues long: Chaperone protein TorD (209 aa).

The protein belongs to the TorD/DmsD family. TorD subfamily.

The protein localises to the cytoplasm. Involved in the biogenesis of TorA. Acts on TorA before the insertion of the molybdenum cofactor and, as a result, probably favors a conformation of the apoenzyme that is competent for acquiring the cofactor. The polypeptide is Chaperone protein TorD (Shewanella sp. (strain MR-4)).